The following is a 559-amino-acid chain: Polypeptide N-acetylgalactosaminyltransferase 1 (559 aa).

Over 1-8 (MRKFAYCK) the chain is Cytoplasmic. The helical; Signal-anchor for type II membrane protein transmembrane segment at 9–28 (VVLATSLIWVLLDMFLLLYF) threads the bilayer. Residues 29–559 (SECNKCDEKK…LRNVTLPEIF (531 aa)) are Lumenal-facing. Positions 45–66 (GDVLEPVQKPHEGPGEMGKPVV) are disordered. N-linked (GlcNAc...) asparagine glycosylation occurs at Asn95. Intrachain disulfides connect Cys106-Cys339, Cys330-Cys408, Cys442-Cys459, Cys482-Cys497, and Cys523-Cys540. A catalytic subdomain A region spans residues 115–225 (LPTTSVVIVF…VGWLEPLLAR (111 aa)). Positions 156 and 186 each coordinate substrate. Mn(2+) is bound by residues Asp209 and His211. The catalytic subdomain B stretch occupies residues 285-347 (PVRTPTMAGG…TCSHVGHVFR (63 aa)). Trp316 is a binding site for substrate. His344 lines the Mn(2+) pocket. Residues Arg347 and Tyr352 each coordinate substrate. Residues 429 to 551 (SSLGEIRNVE…GSRSQQWLLR (123 aa)) enclose the Ricin B-type lectin domain. The N-linked (GlcNAc...) asparagine glycan is linked to Asn552.

This sequence belongs to the glycosyltransferase 2 family. GalNAc-T subfamily. Mn(2+) is required as a cofactor.

The protein localises to the golgi apparatus. The protein resides in the golgi stack membrane. It is found in the secreted. The enzyme catalyses L-seryl-[protein] + UDP-N-acetyl-alpha-D-galactosamine = a 3-O-[N-acetyl-alpha-D-galactosaminyl]-L-seryl-[protein] + UDP + H(+). It catalyses the reaction L-threonyl-[protein] + UDP-N-acetyl-alpha-D-galactosamine = a 3-O-[N-acetyl-alpha-D-galactosaminyl]-L-threonyl-[protein] + UDP + H(+). It functions in the pathway protein modification; protein glycosylation. In terms of biological role, catalyzes the initial reaction in O-linked oligosaccharide biosynthesis, the transfer of an N-acetyl-D-galactosamine residue to a serine or threonine residue on the protein receptor. Has a broad spectrum of substrates such as apomucin-, MUC5AC-, MUC1- and MUC2-derived peptides. The chain is Polypeptide N-acetylgalactosaminyltransferase 1 from Sus scrofa (Pig).